The chain runs to 60 residues: Large ribosomal subunit protein bL32 (60 aa).

The protein belongs to the bacterial ribosomal protein bL32 family.

The sequence is that of Large ribosomal subunit protein bL32 from Persephonella marina (strain DSM 14350 / EX-H1).